We begin with the raw amino-acid sequence, 173 residues long: Membrane protein PM19L (173 aa).

4 helical membrane-spanning segments follow: residues 9–29, 43–63, 83–103, and 124–144; these read IAPLLVLNLIMYLIVIGFASW, GVAGNGATFYFLVFAILAGVV, LAAGAASALIAWAITALAFGL, and FVIILAFTQLLYVAMLHGGLF.

Expressed in roots, leaf blades, leaf sheaths, stems, spikelets and embryos.

The protein resides in the membrane. May be involved in abiotic stress response through abscisic acid-dependent signaling. This chain is Membrane protein PM19L, found in Oryza sativa subsp. japonica (Rice).